Consider the following 322-residue polypeptide: Ribosome biogenesis protein RLP7 (322 aa).

Over residues 1-16 (MSSTQDSKAQTLNSNP) the composition is skewed to polar residues. Residues 1–52 (MSSTQDSKAQTLNSNPEILLRKRRNADRTRIERQELAKKKREEQIKKKRSNK) form a disordered region. The residue at position 2 (Ser-2) is an N-acetylserine. Position 14 is a phosphoserine (Ser-14). The segment covering 26–45 (ADRTRIERQELAKKKREEQI) has biased composition (basic and acidic residues). At Thr-120 the chain carries Phosphothreonine. Ser-278 is modified (phosphoserine).

The protein belongs to the universal ribosomal protein uL30 family.

Its subcellular location is the nucleus. It is found in the nucleolus. In terms of biological role, involved in the biogenesis of the 60S ribosomal subunit. May act as a specificity factor that binds precursor rRNAs and tethers the enzymes that carry out the early 5' to 3' exonucleolytic reactions that generate the mature rRNAs. The sequence is that of Ribosome biogenesis protein RLP7 (RLP7) from Saccharomyces cerevisiae (strain ATCC 204508 / S288c) (Baker's yeast).